A 294-amino-acid polypeptide reads, in one-letter code: 4-hydroxy-tetrahydrodipicolinate synthase (294 aa).

Threonine 47 contacts pyruvate. Tyrosine 136 serves as the catalytic Proton donor/acceptor. Catalysis depends on lysine 164, which acts as the Schiff-base intermediate with substrate. Valine 206 lines the pyruvate pocket.

Belongs to the DapA family. Homotetramer; dimer of dimers.

The protein resides in the cytoplasm. The catalysed reaction is L-aspartate 4-semialdehyde + pyruvate = (2S,4S)-4-hydroxy-2,3,4,5-tetrahydrodipicolinate + H2O + H(+). It functions in the pathway amino-acid biosynthesis; L-lysine biosynthesis via DAP pathway; (S)-tetrahydrodipicolinate from L-aspartate: step 3/4. Catalyzes the condensation of (S)-aspartate-beta-semialdehyde [(S)-ASA] and pyruvate to 4-hydroxy-tetrahydrodipicolinate (HTPA). This is 4-hydroxy-tetrahydrodipicolinate synthase from Cyanothece sp. (strain PCC 7425 / ATCC 29141).